The primary structure comprises 376 residues: Putative F-box protein At1g53370 (376 aa).

The region spanning 22–71 (RNYIDSIPVDLLIDILSRFPPKSIARFYCVSKLWESILRGPDFTELYLTK) is the F-box domain.

The sequence is that of Putative F-box protein At1g53370 from Arabidopsis thaliana (Mouse-ear cress).